The following is a 213-amino-acid chain: ATP synthase peripheral stalk subunit OSCP, mitochondrial (213 aa).

A mitochondrion-targeting transit peptide spans 1–23 (MAAPATSVLSRQVRSFSTSVVRP). The SIFI-degron motif lies at 5-23 (ATSVLSRQVRSFSTSVVRP). 3 positions are modified to N6-acetyllysine: Lys-60, Lys-70, and Lys-73. Position 90 is an N6-succinyllysine (Lys-90). N6-acetyllysine; alternate is present on residues Lys-100 and Lys-158. N6-succinyllysine; alternate is present on residues Lys-100 and Lys-158. Residues Lys-176 and Lys-192 each carry the N6-acetyllysine modification. N6-succinyllysine is present on Lys-199.

Belongs to the ATPase delta chain family. Component of the ATP synthase complex composed at least of ATP5F1A/subunit alpha, ATP5F1B/subunit beta, ATP5MC1/subunit c (homooctomer), MT-ATP6/subunit a, MT-ATP8/subunit 8, ATP5ME/subunit e, ATP5MF/subunit f, ATP5MG/subunit g, ATP5MK/subunit k, ATP5MJ/subunit j, ATP5F1C/subunit gamma, ATP5F1D/subunit delta, ATP5F1E/subunit epsilon, ATP5PF/subunit F6, ATP5PB/subunit b, ATP5PD/subunit d, ATP5PO/subunit OSCP. ATP synthase complex consists of a soluble F(1) head domain (subunits alpha(3) and beta(3)) - the catalytic core - and a membrane F(0) domain - the membrane proton channel (subunits c, a, 8, e, f, g, k and j). These two domains are linked by a central stalk (subunits gamma, delta, and epsilon) rotating inside the F1 region and a stationary peripheral stalk (subunits F6, b, d, and OSCP). Post-translationally, in response to mitochondrial stress, the precursor protein is ubiquitinated by the SIFI complex in the cytoplasm before mitochondrial import, leading to its degradation. Within the SIFI complex, UBR4 initiates ubiquitin chain that are further elongated or branched by KCMF1. Expressed by the principal cells of the epididymis. Detected in flagella of epididymal sperm (at protein level).

It is found in the mitochondrion. The protein localises to the mitochondrion inner membrane. Subunit OSCP, of the mitochondrial membrane ATP synthase complex (F(1)F(0) ATP synthase or Complex V) that produces ATP from ADP in the presence of a proton gradient across the membrane which is generated by electron transport complexes of the respiratory chain. ATP synthase complex consist of a soluble F(1) head domain - the catalytic core - and a membrane F(1) domain - the membrane proton channel. These two domains are linked by a central stalk rotating inside the F(1) region and a stationary peripheral stalk. During catalysis, ATP synthesis in the catalytic domain of F(1) is coupled via a rotary mechanism of the central stalk subunits to proton translocation. In vivo, can only synthesize ATP although its ATP hydrolase activity can be activated artificially in vitro. Part of the complex F(0) domain. Part of the complex F(0) domain and the peripheric stalk, which acts as a stator to hold the catalytic alpha(3)beta(3) subcomplex and subunit a/ATP6 static relative to the rotary elements. The chain is ATP synthase peripheral stalk subunit OSCP, mitochondrial from Rattus norvegicus (Rat).